A 512-amino-acid polypeptide reads, in one-letter code: MEEFPGYFELDRSRQHDFLYPLIFRESIYALAHDHGLNRNRSTLFENEVDYDKKYSLIIVKRLITRMYQRNHLIISANGSVQNPFWGHNKNLYSKILSEGFAVIVEIPFSLRVLSSFERKEKDIAKSPTLRSIHSIFPFLEDQFSHLDYLSHVLIPYPIHLEIAVQTLRYWVKDASSLHLLRIFLHEYWNSFSTPKKHITLFLKGNSRFFLFLYNSYVCEYESIFLFIRNQSSHFQSTSSGVFFERILFYVKIDHLVEVFVGTDFLDIRSFFKDPNMHYVRYQGKSILASKDTPLLMNKWKYYLVNLWQYHFSVWSQPGRININQLGKYSLDFLGYFSNVQLKSSVVRNQTLENSFLINNAMKKLETTVPILPLIGSLSRAKFCNALGHPISKPTRTDSSDSDIIDRFVRICRNLSHYHSGSSKKKSLYRIKYILRLSCVKTLARKHKSSVRAFLKRLGSELGDEFLTEEGVVLAVIFPKASGRLYRGRIWYLDIPCINDWVGDAEGSIFTK.

It belongs to the intron maturase 2 family. MatK subfamily.

The protein resides in the plastid. It localises to the chloroplast. In terms of biological role, usually encoded in the trnK tRNA gene intron. Probably assists in splicing its own and other chloroplast group II introns. The sequence is that of Maturase K from Oenothera argillicola (Appalachian evening primrose).